A 599-amino-acid polypeptide reads, in one-letter code: Aspartate--tRNA(Asp/Asn) ligase (599 aa).

Glu-173 lines the L-aspartate pocket. Residues 197-200 are aspartate; that stretch reads QLYK. Arg-219 is an L-aspartate binding site. ATP contacts are provided by residues 219 to 221 and Gln-228; that span reads RDE. His-451 provides a ligand contact to L-aspartate. Glu-484 serves as a coordination point for ATP. Residue Arg-491 coordinates L-aspartate. ATP is bound at residue 536 to 539; that stretch reads GLDR.

The protein belongs to the class-II aminoacyl-tRNA synthetase family. Type 1 subfamily. In terms of assembly, homodimer.

Its subcellular location is the cytoplasm. The enzyme catalyses tRNA(Asx) + L-aspartate + ATP = L-aspartyl-tRNA(Asx) + AMP + diphosphate. Its function is as follows. Aspartyl-tRNA synthetase with relaxed tRNA specificity since it is able to aspartylate not only its cognate tRNA(Asp) but also tRNA(Asn). Reaction proceeds in two steps: L-aspartate is first activated by ATP to form Asp-AMP and then transferred to the acceptor end of tRNA(Asp/Asn). In Methylococcus capsulatus (strain ATCC 33009 / NCIMB 11132 / Bath), this protein is Aspartate--tRNA(Asp/Asn) ligase.